We begin with the raw amino-acid sequence, 297 residues long: MENSTPKKISESQIKNLALSGGGFYGFAVVGALKEIFDNYIDPNNIKTISGVSVGSIIATMLAIGYSIDEITKIMFEIDMDTLIKDSYFSYYTLWEKFGMYNADKLEQEIERIIRDKTHIKNCTFSQIEKNLIIVTTNLNYQRTRIFSKLETPTMIISKAVRMSISYPFIMVPVLFEGDLYGDGGETLNYPITLFDDDLDKTIGITFANHNENDDGTLKTRLPINNFYDYIVSLGLTMNRSSYISQISSKYLDRSIVIKINEDISSMQFNLDLKQKEYLFECGIKSVKQQIIKLINH.

A run of 2 helical transmembrane segments spans residues 17 to 37 and 48 to 68; these read LALSGGGFYGFAVVGALKEIF and TISGVSVGSIIATMLAIGYSI. Residues 17–196 form the PNPLA domain; sequence LALSGGGFYG…TLNYPITLFD (180 aa). Residues 21-26 carry the GXGXXG motif; sequence GGGFYG. Residues 51 to 55 carry the GXSXG motif; the sequence is GVSVG. The Nucleophile role is filled by Ser53. The N-linked (GlcNAc...) asparagine; by host glycan is linked to Asn122. The active-site Proton acceptor is the Asp183. The short motif at 183-185 is the DGA/G element; sequence DGG. N-linked (GlcNAc...) asparagine; by host glycosylation occurs at Asn239.

The protein resides in the membrane. Probable lipid hydrolase. This is an uncharacterized protein from Acanthamoeba polyphaga mimivirus (APMV).